Consider the following 401-residue polypeptide: L-rhamnonate dehydratase (401 aa).

Substrate-binding residues include H29 and R55. The Mg(2+) site is built by D222, E248, and E276. H325 (proton acceptor) is an active-site residue. E345 is a binding site for substrate.

This sequence belongs to the mandelate racemase/muconate lactonizing enzyme family. RhamD subfamily. As to quaternary structure, homooctamer; tetramer of dimers. The cofactor is Mg(2+).

The enzyme catalyses L-rhamnonate = 2-dehydro-3-deoxy-L-rhamnonate + H2O. In terms of biological role, catalyzes the dehydration of L-rhamnonate to 2-keto-3-deoxy-L-rhamnonate (KDR). This is L-rhamnonate dehydratase from Salmonella schwarzengrund (strain CVM19633).